The chain runs to 394 residues: Ribulose bisphosphate carboxylase large chain (394 aa).

Position 5 is an N6,N6,N6-trimethyllysine (Lys5). Substrate-binding residues include Asn114 and Thr164. Residue Lys166 is the Proton acceptor of the active site. Lys168 lines the substrate pocket. The Mg(2+) site is built by Lys192, Asp194, and Glu195. Position 192 is an N6-carboxylysine (Lys192). The active-site Proton acceptor is the His285. Residues Arg286, His318, and Ser370 each contribute to the substrate site.

The protein belongs to the RuBisCO large chain family. Type I subfamily. Heterohexadecamer of 8 large chains and 8 small chains; disulfide-linked. The disulfide link is formed within the large subunit homodimers. It depends on Mg(2+) as a cofactor. In terms of processing, the disulfide bond which can form in the large chain dimeric partners within the hexadecamer appears to be associated with oxidative stress and protein turnover.

It localises to the plastid. The protein resides in the chloroplast. The catalysed reaction is 2 (2R)-3-phosphoglycerate + 2 H(+) = D-ribulose 1,5-bisphosphate + CO2 + H2O. It catalyses the reaction D-ribulose 1,5-bisphosphate + O2 = 2-phosphoglycolate + (2R)-3-phosphoglycerate + 2 H(+). RuBisCO catalyzes two reactions: the carboxylation of D-ribulose 1,5-bisphosphate, the primary event in carbon dioxide fixation, as well as the oxidative fragmentation of the pentose substrate in the photorespiration process. Both reactions occur simultaneously and in competition at the same active site. The chain is Ribulose bisphosphate carboxylase large chain (rbcL) from Nelumbo lutea (American lotus).